Reading from the N-terminus, the 100-residue chain is Integration host factor subunit alpha (100 aa).

Positions 53–73 (FDLRDKRQRPGRNPKTGEEIP) are disordered.

This sequence belongs to the bacterial histone-like protein family. In terms of assembly, heterodimer of an alpha and a beta chain.

Its function is as follows. This protein is one of the two subunits of integration host factor, a specific DNA-binding protein that functions in genetic recombination as well as in transcriptional and translational control. The polypeptide is Integration host factor subunit alpha (Pseudomonas aeruginosa (strain LESB58)).